The chain runs to 203 residues: Small ribosomal subunit protein uS7 (203 aa).

Residues 1 to 22 are disordered; sequence MSESEAPEPDQPAGAEEATGAK.

The protein belongs to the universal ribosomal protein uS7 family. In terms of assembly, part of the 30S ribosomal subunit.

One of the primary rRNA binding proteins, it binds directly to 16S rRNA where it nucleates assembly of the head domain of the 30S subunit. Is located at the subunit interface close to the decoding center. This Halococcus morrhuae (Micrococcus morrhuae) protein is Small ribosomal subunit protein uS7.